A 248-amino-acid polypeptide reads, in one-letter code: UPF0246 protein MYPE6270 (248 aa).

The protein belongs to the UPF0246 family.

The chain is UPF0246 protein MYPE6270 from Malacoplasma penetrans (strain HF-2) (Mycoplasma penetrans).